A 320-amino-acid polypeptide reads, in one-letter code: Putative membrane-bound redox modulator Alx (320 aa).

Residues M1–T6 are Periplasmic-facing. The helical transmembrane segment at P7–L27 threads the bilayer. Residues Q28–A43 lie on the Cytoplasmic side of the membrane. A helical membrane pass occupies residues W44 to V64. The Periplasmic portion of the chain corresponds to Q65 to L89. A helical membrane pass occupies residues A90–L110. The Cytoplasmic segment spans residues Q111 to R113. Residues V114 to S134 form a helical membrane-spanning segment. A topological domain (periplasmic) is located at residue W135. A helical transmembrane segment spans residues L136–V156. Over K157–G198 the chain is Cytoplasmic. The chain crosses the membrane as a helical span at residues L199–F219. Residues A220–P225 are Periplasmic-facing. A helical membrane pass occupies residues A226–L246. Residues G247–R261 are Cytoplasmic-facing. The helical transmembrane segment at F262–I282 threads the bilayer. Over V283 to Y286 the chain is Periplasmic. Residues H287–I307 form a helical membrane-spanning segment. Residues N308–G320 are Cytoplasmic-facing.

This sequence belongs to the TerC family.

Its subcellular location is the cell inner membrane. In terms of biological role, has been proposed to be a redox modulator. This chain is Putative membrane-bound redox modulator Alx (alx), found in Shigella flexneri.